A 471-amino-acid chain; its full sequence is Glutamate--tRNA ligase (471 aa).

The short motif at 9–19 (PSPTGYLHVGG) is the 'HIGH' region element. Zn(2+) contacts are provided by Cys98, Cys100, Cys125, and His127. The short motif at 237–241 (KLSKR) is the 'KMSKS' region element. An ATP-binding site is contributed by Lys240.

This sequence belongs to the class-I aminoacyl-tRNA synthetase family. Glutamate--tRNA ligase type 1 subfamily. In terms of assembly, monomer. The cofactor is Zn(2+).

Its subcellular location is the cytoplasm. The enzyme catalyses tRNA(Glu) + L-glutamate + ATP = L-glutamyl-tRNA(Glu) + AMP + diphosphate. Its function is as follows. Catalyzes the attachment of glutamate to tRNA(Glu) in a two-step reaction: glutamate is first activated by ATP to form Glu-AMP and then transferred to the acceptor end of tRNA(Glu). This Escherichia coli (strain ATCC 8739 / DSM 1576 / NBRC 3972 / NCIMB 8545 / WDCM 00012 / Crooks) protein is Glutamate--tRNA ligase.